We begin with the raw amino-acid sequence, 236 residues long: Ribose-5-phosphate isomerase A (236 aa).

Substrate is bound by residues 28–31, 83–86, and 96–99; these read TGST, DGAD, and KGGG. Catalysis depends on Glu105, which acts as the Proton acceptor. Lys123 lines the substrate pocket.

It belongs to the ribose 5-phosphate isomerase family. As to quaternary structure, homodimer.

The enzyme catalyses aldehydo-D-ribose 5-phosphate = D-ribulose 5-phosphate. Its pathway is carbohydrate degradation; pentose phosphate pathway; D-ribose 5-phosphate from D-ribulose 5-phosphate (non-oxidative stage): step 1/1. Catalyzes the reversible conversion of ribose-5-phosphate to ribulose 5-phosphate. This is Ribose-5-phosphate isomerase A from Methylorubrum populi (strain ATCC BAA-705 / NCIMB 13946 / BJ001) (Methylobacterium populi).